A 360-amino-acid polypeptide reads, in one-letter code: Phospho-N-acetylmuramoyl-pentapeptide-transferase (360 aa).

10 helical membrane-spanning segments follow: residues 25-45 (RGIL…PWLI), 74-94 (MGGA…ADLA), 97-117 (YVWV…VDDY), 132-152 (WKYF…YMTA), 168-188 (IEIP…VGSS), 199-219 (GLAI…CYLS), 236-256 (SGEL…FLWF), 263-283 (VFMG…IAVI), 288-308 (VVLF…MIQV), and 338-358 (VIVR…ATLK).

This sequence belongs to the glycosyltransferase 4 family. MraY subfamily. Mg(2+) serves as cofactor.

It localises to the cell inner membrane. It catalyses the reaction UDP-N-acetyl-alpha-D-muramoyl-L-alanyl-gamma-D-glutamyl-meso-2,6-diaminopimeloyl-D-alanyl-D-alanine + di-trans,octa-cis-undecaprenyl phosphate = di-trans,octa-cis-undecaprenyl diphospho-N-acetyl-alpha-D-muramoyl-L-alanyl-D-glutamyl-meso-2,6-diaminopimeloyl-D-alanyl-D-alanine + UMP. It participates in cell wall biogenesis; peptidoglycan biosynthesis. Functionally, catalyzes the initial step of the lipid cycle reactions in the biosynthesis of the cell wall peptidoglycan: transfers peptidoglycan precursor phospho-MurNAc-pentapeptide from UDP-MurNAc-pentapeptide onto the lipid carrier undecaprenyl phosphate, yielding undecaprenyl-pyrophosphoryl-MurNAc-pentapeptide, known as lipid I. The chain is Phospho-N-acetylmuramoyl-pentapeptide-transferase from Stutzerimonas stutzeri (strain A1501) (Pseudomonas stutzeri).